A 244-amino-acid chain; its full sequence is tRNA (guanine-N(1)-)-methyltransferase (244 aa).

Residues Gly-112 and 131–136 (IGDFIV) each bind S-adenosyl-L-methionine.

The protein belongs to the RNA methyltransferase TrmD family. As to quaternary structure, homodimer.

Its subcellular location is the cytoplasm. The enzyme catalyses guanosine(37) in tRNA + S-adenosyl-L-methionine = N(1)-methylguanosine(37) in tRNA + S-adenosyl-L-homocysteine + H(+). Functionally, specifically methylates guanosine-37 in various tRNAs. In Clostridium kluyveri (strain NBRC 12016), this protein is tRNA (guanine-N(1)-)-methyltransferase.